The chain runs to 154 residues: Myoglobin (154 aa).

Residues 2–148 enclose the Globin domain; it reads GLSDGEWQLV…FRNDIAAKYK (147 aa). Ser4 is subject to Phosphoserine. Position 65 (His65) interacts with nitrite. His65 lines the O2 pocket. Thr68 is modified (phosphothreonine). A heme b-binding site is contributed by His94.

It belongs to the globin family. In terms of assembly, monomeric.

It is found in the cytoplasm. It localises to the sarcoplasm. It carries out the reaction Fe(III)-heme b-[protein] + nitric oxide + H2O = Fe(II)-heme b-[protein] + nitrite + 2 H(+). It catalyses the reaction H2O2 + AH2 = A + 2 H2O. Functionally, monomeric heme protein which primary function is to store oxygen and facilitate its diffusion within muscle tissues. Reversibly binds oxygen through a pentacoordinated heme iron and enables its timely and efficient release as needed during periods of heightened demand. Depending on the oxidative conditions of tissues and cells, and in addition to its ability to bind oxygen, it also has a nitrite reductase activity whereby it regulates the production of bioactive nitric oxide. Under stress conditions, like hypoxia and anoxia, it also protects cells against reactive oxygen species thanks to its pseudoperoxidase activity. This Ctenodactylus gundi (Northern gundi) protein is Myoglobin (MB).